The sequence spans 262 residues: Small ribosomal subunit protein uS2 (262 aa).

The interval 228–262 (VSNEEVAAEQNIDLDESKEATEAETTEENTSVESN) is disordered.

It belongs to the universal ribosomal protein uS2 family.

The protein is Small ribosomal subunit protein uS2 of Staphylococcus saprophyticus subsp. saprophyticus (strain ATCC 15305 / DSM 20229 / NCIMB 8711 / NCTC 7292 / S-41).